The primary structure comprises 196 residues: Imidazoleglycerol-phosphate dehydratase (196 aa).

Belongs to the imidazoleglycerol-phosphate dehydratase family.

The protein localises to the cytoplasm. It catalyses the reaction D-erythro-1-(imidazol-4-yl)glycerol 3-phosphate = 3-(imidazol-4-yl)-2-oxopropyl phosphate + H2O. The protein operates within amino-acid biosynthesis; L-histidine biosynthesis; L-histidine from 5-phospho-alpha-D-ribose 1-diphosphate: step 6/9. This chain is Imidazoleglycerol-phosphate dehydratase, found in Desulforudis audaxviator (strain MP104C).